The following is a 246-amino-acid chain: UDP-N-acetyl-D-mannosaminuronic acid transferase (246 aa).

Belongs to the glycosyltransferase 26 family.

The enzyme catalyses UDP-N-acetyl-alpha-D-mannosaminouronate + N-acetyl-alpha-D-glucosaminyl-di-trans,octa-cis-undecaprenyl diphosphate = beta-D-ManNAcA-(1-&gt;4)-alpha-D-GlcNAc-di-trans,octa-cis-undecaprenyl diphosphate + UDP + H(+). Its pathway is bacterial outer membrane biogenesis; enterobacterial common antigen biosynthesis. Catalyzes the synthesis of Und-PP-GlcNAc-ManNAcA (Lipid II), the second lipid-linked intermediate involved in enterobacterial common antigen (ECA) synthesis. The polypeptide is UDP-N-acetyl-D-mannosaminuronic acid transferase (Escherichia coli O157:H7).